A 267-amino-acid chain; its full sequence is LexA repressor (267 aa).

The disordered stretch occupies residues 1-44; it reads MSIDESSDNPTPRPKLGRPPKSEADKRAEKEAQKDGKKPALSTR. Positions 20-38 are enriched in basic and acidic residues; the sequence is PKSEADKRAEKEAQKDGKK. A DNA-binding region (H-T-H motif) is located at residues 65-85; that stretch reads IREIADAVGLHSTSSVSYHLT. Residues 111–140 are disordered; that stretch reads GQLTNESTKKNAGSPQPTSAAIPEPTTEGE. The span at 112–129 shows a compositional bias: polar residues; it reads QLTNESTKKNAGSPQPTS. Active-site for autocatalytic cleavage activity residues include Ser-191 and Lys-228.

The protein belongs to the peptidase S24 family. In terms of assembly, homodimer.

The enzyme catalyses Hydrolysis of Ala-|-Gly bond in repressor LexA.. Functionally, represses a number of genes involved in the response to DNA damage (SOS response), including recA and lexA. In the presence of single-stranded DNA, RecA interacts with LexA causing an autocatalytic cleavage which disrupts the DNA-binding part of LexA, leading to derepression of the SOS regulon and eventually DNA repair. The sequence is that of LexA repressor from Corynebacterium jeikeium (strain K411).